The following is a 104-amino-acid chain: Thioredoxin-3 (104 aa).

The Thioredoxin domain maps to 2–104 (SKVIHVTSNE…TLRSTLEANI (103 aa)). Residues Cys-31 and Cys-34 each act as nucleophile in the active site. Cysteines 31 and 34 form a disulfide.

The protein belongs to the thioredoxin family.

Participates in various redox reactions through the reversible oxidation of its active center dithiol to a disulfide and catalyzes dithiol-disulfide exchange reactions. The polypeptide is Thioredoxin-3 (trxC) (Dictyostelium discoideum (Social amoeba)).